The primary structure comprises 430 residues: 3-phosphoshikimate 1-carboxyvinyltransferase (430 aa).

3-phosphoshikimate-binding residues include Lys-33, Ser-34, and Arg-38. Position 33 (Lys-33) interacts with phosphoenolpyruvate. Phosphoenolpyruvate-binding residues include Gly-101 and Arg-129. 3-phosphoshikimate-binding residues include Ser-172, Ser-173, Gln-174, Ser-201, Glu-319, and His-346. Gln-174 is a binding site for phosphoenolpyruvate. Glu-319 serves as the catalytic Proton acceptor. 3 residues coordinate phosphoenolpyruvate: Arg-350, Arg-391, and Lys-416.

It belongs to the EPSP synthase family. As to quaternary structure, monomer.

It is found in the cytoplasm. It carries out the reaction 3-phosphoshikimate + phosphoenolpyruvate = 5-O-(1-carboxyvinyl)-3-phosphoshikimate + phosphate. The protein operates within metabolic intermediate biosynthesis; chorismate biosynthesis; chorismate from D-erythrose 4-phosphate and phosphoenolpyruvate: step 6/7. In terms of biological role, catalyzes the transfer of the enolpyruvyl moiety of phosphoenolpyruvate (PEP) to the 5-hydroxyl of shikimate-3-phosphate (S3P) to produce enolpyruvyl shikimate-3-phosphate and inorganic phosphate. The polypeptide is 3-phosphoshikimate 1-carboxyvinyltransferase (Corynebacterium glutamicum (strain R)).